Consider the following 757-residue polypeptide: Endonuclease MutS2 (757 aa).

321 to 328 contacts ATP; it reads GPNMGGKT. A Smr domain is found at 681–756; it reads IDIRGMTVEE…GTGVTVVEVK (76 aa).

The protein belongs to the DNA mismatch repair MutS family. MutS2 subfamily. In terms of assembly, homodimer. Binds to stalled ribosomes, contacting rRNA. Interacts with MutL.

Its activity is regulated as follows. Nuclease activity is stimulated by interaction with MutL and inhibited in the presence of non-hydrolytic ATP (ADPnP). ATPase activity is stimulated by DNA. Its function is as follows. Endonuclease that is involved in the suppression of homologous recombination and thus may have a key role in the control of bacterial genetic diversity. Has ATPase activity. Binds to DNA. Acts as a ribosome collision sensor, splitting the ribosome into its 2 subunits. Detects stalled/collided 70S ribosomes which it binds and splits by an ATP-hydrolysis driven conformational change. Acts upstream of the ribosome quality control system (RQC), a ribosome-associated complex that mediates the extraction of incompletely synthesized nascent chains from stalled ribosomes and their subsequent degradation. Probably generates substrates for RQC. The sequence is that of Endonuclease MutS2 from Thermotoga maritima (strain ATCC 43589 / DSM 3109 / JCM 10099 / NBRC 100826 / MSB8).